A 414-amino-acid polypeptide reads, in one-letter code: Gamma-glutamyl phosphate reductase (414 aa).

Belongs to the gamma-glutamyl phosphate reductase family.

The protein localises to the cytoplasm. It catalyses the reaction L-glutamate 5-semialdehyde + phosphate + NADP(+) = L-glutamyl 5-phosphate + NADPH + H(+). The protein operates within amino-acid biosynthesis; L-proline biosynthesis; L-glutamate 5-semialdehyde from L-glutamate: step 2/2. Functionally, catalyzes the NADPH-dependent reduction of L-glutamate 5-phosphate into L-glutamate 5-semialdehyde and phosphate. The product spontaneously undergoes cyclization to form 1-pyrroline-5-carboxylate. This Thermoanaerobacter sp. (strain X514) protein is Gamma-glutamyl phosphate reductase.